The following is a 147-amino-acid chain: Acidic phospholipase A2 beta-bungarotoxin A3 chain (147 aa).

The signal sequence occupies residues 1–19; it reads MYPAHLLVLSAVCVSLLGA. Residues 20 to 27 constitute a propeptide that is removed on maturation; that stretch reads ANIPPHPL. 6 disulfide bridges follow: Cys54–Cys146, Cys56–Cys72, Cys71–Cys127, Cys78–Cys120, Cys88–Cys113, and Cys106–Cys118. Ca(2+)-binding residues include Tyr55, Gly57, and Gly59. The active site involves His75. Residue Asp76 participates in Ca(2+) binding. The active site involves Asp121.

This sequence belongs to the phospholipase A2 family. Group I subfamily. D49 sub-subfamily. As to quaternary structure, heterodimer; disulfide-linked. The A chains have phospholipase A2 activity and the B chains show homology with the basic protease inhibitors. The A3 chain is found in beta-5 bungarotoxins. Ca(2+) serves as cofactor. In terms of tissue distribution, expressed by the venom gland.

It localises to the secreted. The catalysed reaction is a 1,2-diacyl-sn-glycero-3-phosphocholine + H2O = a 1-acyl-sn-glycero-3-phosphocholine + a fatty acid + H(+). Its function is as follows. Snake venom phospholipase A2 (PLA2) that inhibits neuromuscular transmission by blocking acetylcholine release from the nerve termini. PLA2 catalyzes the calcium-dependent hydrolysis of the 2-acyl groups in 3-sn-phosphoglycerides. This chain is Acidic phospholipase A2 beta-bungarotoxin A3 chain, found in Bungarus multicinctus (Many-banded krait).